We begin with the raw amino-acid sequence, 173 residues long: Shikimate kinase (173 aa).

14–19 (GAGKST) serves as a coordination point for ATP. Serine 18 is a Mg(2+) binding site. Substrate is bound by residues aspartate 36, arginine 60, and glycine 82. Arginine 120 is a binding site for ATP. Arginine 140 is a binding site for substrate. Glutamine 157 contacts ATP.

It belongs to the shikimate kinase family. In terms of assembly, monomer. The cofactor is Mg(2+).

It localises to the cytoplasm. The catalysed reaction is shikimate + ATP = 3-phosphoshikimate + ADP + H(+). The protein operates within metabolic intermediate biosynthesis; chorismate biosynthesis; chorismate from D-erythrose 4-phosphate and phosphoenolpyruvate: step 5/7. Its function is as follows. Catalyzes the specific phosphorylation of the 3-hydroxyl group of shikimic acid using ATP as a cosubstrate. The protein is Shikimate kinase of Buchnera aphidicola subsp. Acyrthosiphon pisum (strain APS) (Acyrthosiphon pisum symbiotic bacterium).